The primary structure comprises 298 residues: Putative GATA zinc finger domain-containing protein 25 (298 aa).

Residues 4–37 (DNKNKNDNYQESIQRIVNQRNNLLKEIENKINQQ) are a coiled coil. Residues 148-227 (QQQLQQSHTK…RGRPSKPKPE (80 aa)) form a disordered region. The segment covering 183–202 (EENEENEENEENEENEENEE) has biased composition (acidic residues). Positions 203 to 212 (NKEKDVEVAK) are enriched in basic and acidic residues. Positions 214-223 (NKPKRGRPSK) are enriched in basic residues. The segment at 229–256 (CFRYGTRSCPYWRKNVIKGELVDVCNAC) adopts a GATA-type; degenerate zinc-finger fold.

This Dictyostelium discoideum (Social amoeba) protein is Putative GATA zinc finger domain-containing protein 25 (gtaY).